Reading from the N-terminus, the 429-residue chain is Serine--tRNA ligase (429 aa).

235 to 237 (TAE) serves as a coordination point for L-serine. Residue 266 to 268 (RSE) coordinates ATP. Residue glutamate 289 coordinates L-serine. Position 353-356 (353-356 (EISS)) interacts with ATP. L-serine is bound at residue serine 389.

Belongs to the class-II aminoacyl-tRNA synthetase family. Type-1 seryl-tRNA synthetase subfamily. In terms of assembly, homodimer. The tRNA molecule binds across the dimer.

Its subcellular location is the cytoplasm. It carries out the reaction tRNA(Ser) + L-serine + ATP = L-seryl-tRNA(Ser) + AMP + diphosphate + H(+). The enzyme catalyses tRNA(Sec) + L-serine + ATP = L-seryl-tRNA(Sec) + AMP + diphosphate + H(+). It functions in the pathway aminoacyl-tRNA biosynthesis; selenocysteinyl-tRNA(Sec) biosynthesis; L-seryl-tRNA(Sec) from L-serine and tRNA(Sec): step 1/1. Functionally, catalyzes the attachment of serine to tRNA(Ser). Is also able to aminoacylate tRNA(Sec) with serine, to form the misacylated tRNA L-seryl-tRNA(Sec), which will be further converted into selenocysteinyl-tRNA(Sec). In Haemophilus influenzae (strain PittEE), this protein is Serine--tRNA ligase.